The chain runs to 177 residues: Large ribosomal subunit protein uL6 (177 aa).

The protein belongs to the universal ribosomal protein uL6 family. As to quaternary structure, part of the 50S ribosomal subunit.

Its function is as follows. This protein binds to the 23S rRNA, and is important in its secondary structure. It is located near the subunit interface in the base of the L7/L12 stalk, and near the tRNA binding site of the peptidyltransferase center. In Bradyrhizobium diazoefficiens (strain JCM 10833 / BCRC 13528 / IAM 13628 / NBRC 14792 / USDA 110), this protein is Large ribosomal subunit protein uL6.